We begin with the raw amino-acid sequence, 467 residues long: Acyl-CoA-binding domain-containing protein 5 (467 aa).

Positions 8–97 (HQTRFEAAVS…MKKIIETMPV (90 aa)) constitute an ACB domain. An acyl-CoA is bound by residues 19–28 (IQSLPKNGSF), 39–43 (YSFYK), K65, and Y84. 3 disordered regions span residues 119–204 (KHGR…IVLN), 219–240 (TPLP…EGEP), and 304–376 (ITEN…DRGP). Positions 125 to 139 (GVTSELGSVLTSTPN) are enriched in polar residues. Over residues 170–187 (DEEDEEDETEHSEEEEKE) the composition is skewed to acidic residues. Basic and acidic residues-rich tracts occupy residues 312-322 (ELKDGGEDGKQ) and 335-347 (KSEH…ERSL). Over residues 352–372 (GGEGSRSGQIGSSGDGDGWGS) the composition is skewed to gly residues. Residues 382-411 (EQIAVVLMRLQEDMQNVLQRLHSLEVQTAS) adopt a coiled-coil conformation. The helical transmembrane segment at 439–459 (GTLALAVVWPFVVHWLMHVFL) threads the bilayer.

This sequence belongs to the ATG37 family.

It is found in the peroxisome membrane. Its function is as follows. Acyl-CoA binding protein which acts as the peroxisome receptor for pexophagy but is dispensable for aggrephagy and nonselective autophagy. Binds medium- and long-chain acyl-CoA esters. This Xenopus laevis (African clawed frog) protein is Acyl-CoA-binding domain-containing protein 5 (acbd5).